Reading from the N-terminus, the 410-residue chain is Multifunctional CCA protein (410 aa).

The ATP site is built by glycine 8 and arginine 11. CTP is bound by residues glycine 8 and arginine 11. Residues glutamate 21 and aspartate 23 each contribute to the Mg(2+) site. Arginine 91, arginine 137, and arginine 140 together coordinate ATP. The CTP site is built by arginine 91, arginine 137, and arginine 140. The region spanning 228–329 is the HD domain; sequence TGIHSLMALR…VKLLEQVDAF (102 aa).

It belongs to the tRNA nucleotidyltransferase/poly(A) polymerase family. Bacterial CCA-adding enzyme type 1 subfamily. As to quaternary structure, monomer. Can also form homodimers and oligomers. Mg(2+) is required as a cofactor. Ni(2+) serves as cofactor.

It carries out the reaction a tRNA precursor + 2 CTP + ATP = a tRNA with a 3' CCA end + 3 diphosphate. It catalyses the reaction a tRNA with a 3' CCA end + 2 CTP + ATP = a tRNA with a 3' CCACCA end + 3 diphosphate. In terms of biological role, catalyzes the addition and repair of the essential 3'-terminal CCA sequence in tRNAs without using a nucleic acid template. Adds these three nucleotides in the order of C, C, and A to the tRNA nucleotide-73, using CTP and ATP as substrates and producing inorganic pyrophosphate. tRNA 3'-terminal CCA addition is required both for tRNA processing and repair. Also involved in tRNA surveillance by mediating tandem CCA addition to generate a CCACCA at the 3' terminus of unstable tRNAs. While stable tRNAs receive only 3'-terminal CCA, unstable tRNAs are marked with CCACCA and rapidly degraded. The polypeptide is Multifunctional CCA protein (Legionella pneumophila (strain Paris)).